The chain runs to 360 residues: MTSILREQRRDNVWDRFCEWVTSTDNRIYVGWFGVLMIPTLLTATICFIVAFIAAPPVDIDGIREPVAGSLMYGNNIISGAVVPSSNAIGLHFYPIWEAASLDEWLYNGGPYQLVVFHFLLGISCYMGRQWELSYRLGMRPWICVAYSAPLSAAFAVFLIYPIGQGSFSDGMPLGISGTFNFMFVFQAEHNILMHPFHMLGVAGVFGGSLFSAMHGSLVTSSLVRETTETESQNYGYKFGQEEETYNIVAAHGYFGRLIFQYASFNNSRSLHFFLGAWPVVGIWFTSMGISTMAFNLNGFNFNQSVLDSQGKVINTWADVLNRANLGMEVMHERNAHNFPLDLAAGEATPVALTAPSIHG.

The next 3 membrane-spanning stretches (helical) occupy residues 29–46 (YVGW…TATI), 118–133 (HFLL…QWEL), and 142–156 (WICV…AAFA). H118 serves as a coordination point for chlorophyll a. Residue Y126 participates in pheophytin a binding. [CaMn4O5] cluster contacts are provided by D170 and E189. A helical transmembrane segment spans residues 197–218 (FHMLGVAGVFGGSLFSAMHGSL). A chlorophyll a-binding site is contributed by H198. Residues H215 and 264–265 (SF) contribute to the a quinone site. H215 is a binding site for Fe cation. Position 272 (H272) interacts with Fe cation. A helical membrane pass occupies residues 274–288 (FLGAWPVVGIWFTSM). [CaMn4O5] cluster contacts are provided by H332, E333, D342, and A344. The propeptide occupies 345–360 (AGEATPVALTAPSIHG).

The protein belongs to the reaction center PufL/M/PsbA/D family. As to quaternary structure, PSII is composed of 1 copy each of membrane proteins PsbA, PsbB, PsbC, PsbD, PsbE, PsbF, PsbH, PsbI, PsbJ, PsbK, PsbL, PsbM, PsbT, PsbX, PsbY, PsbZ, Psb30/Ycf12, peripheral proteins PsbO, CyanoQ (PsbQ), PsbU, PsbV and a large number of cofactors. It forms dimeric complexes. The D1/D2 heterodimer binds P680, chlorophylls that are the primary electron donor of PSII, and subsequent electron acceptors. It shares a non-heme iron and each subunit binds pheophytin, quinone, additional chlorophylls, carotenoids and lipids. D1 provides most of the ligands for the Mn4-Ca-O5 cluster of the oxygen-evolving complex (OEC). There is also a Cl(-1) ion associated with D1 and D2, which is required for oxygen evolution. The PSII complex binds additional chlorophylls, carotenoids and specific lipids. is required as a cofactor. Tyr-161 forms a radical intermediate that is referred to as redox-active TyrZ, YZ or Y-Z. Post-translationally, C-terminally processed by CtpA; processing is essential to allow assembly of the oxygen-evolving complex and thus photosynthetic growth.

The protein resides in the cellular thylakoid membrane. It carries out the reaction 2 a plastoquinone + 4 hnu + 2 H2O = 2 a plastoquinol + O2. Its function is as follows. Photosystem II (PSII) is a light-driven water:plastoquinone oxidoreductase that uses light energy to abstract electrons from H(2)O, generating O(2) and a proton gradient subsequently used for ATP formation. It consists of a core antenna complex that captures photons, and an electron transfer chain that converts photonic excitation into a charge separation. The D1/D2 (PsbA/PsbD) reaction center heterodimer binds P680, the primary electron donor of PSII as well as several subsequent electron acceptors. This Synechococcus sp. (strain ATCC 27144 / PCC 6301 / SAUG 1402/1) (Anacystis nidulans) protein is Photosystem II protein D1 3.